Here is a 139-residue protein sequence, read N- to C-terminus: MRVKGGTVSRARRKKFVKLAKGYRGQRRINYKVAKQQVYKSYLYAYRDRKNTKRNFRKLWIARINAAARMNGLSYSKLMHGLTLAGVELNRKMLAEIAVSDFDTFTKLADQAKAALSSDNVLVQARTAATTDTTVSVER.

It belongs to the bacterial ribosomal protein bL20 family.

Functionally, binds directly to 23S ribosomal RNA and is necessary for the in vitro assembly process of the 50S ribosomal subunit. It is not involved in the protein synthesizing functions of that subunit. The polypeptide is Large ribosomal subunit protein bL20 (Leuconostoc mesenteroides subsp. mesenteroides (strain ATCC 8293 / DSM 20343 / BCRC 11652 / CCM 1803 / JCM 6124 / NCDO 523 / NBRC 100496 / NCIMB 8023 / NCTC 12954 / NRRL B-1118 / 37Y)).